A 1651-amino-acid polypeptide reads, in one-letter code: Putative serine/threonine-protein kinase/receptor R818 (1651 aa).

The first 19 residues, 1 to 19 (MKSIGIFVVALWLTHFCDG), serve as a signal peptide directing secretion. N111, N135, N190, N236, N275, N276, N287, N452, N455, N477, N495, N540, N596, and N722 each carry an N-linked (GlcNAc...) asparagine; by host glycan. Residues 749 to 769 (IILAIVIPVSFVICCIIIVLV) form a helical membrane-spanning segment. Residues 793–1057 (LDFMESLGSG…EIMTKLSTLI (265 aa)) enclose the Protein kinase 1 domain. ATP is bound by residues 799–807 (LGSGGSGEV) and K820. The active-site Proton acceptor is D915. Positions 1089 to 1115 (IHNNDETKNSFGSTTYGSNTISSSSNT) are disordered. Low complexity predominate over residues 1100–1115 (GSTTYGSNTISSSSNT). One can recognise a Guanylate cyclase domain in the interval 1135 to 1278 (IIVFTDIISA…VTVNIAAKIT (144 aa)). One can recognise a Protein kinase 2 domain in the interval 1394–1645 (IQIGKQIGVG…DVIMGLNDML (252 aa)). ATP contacts are provided by residues 1400–1408 (IGVGSYGIV) and K1421. D1515 serves as the catalytic Proton acceptor.

The protein localises to the membrane. It carries out the reaction L-seryl-[protein] + ATP = O-phospho-L-seryl-[protein] + ADP + H(+). The enzyme catalyses L-threonyl-[protein] + ATP = O-phospho-L-threonyl-[protein] + ADP + H(+). This is Putative serine/threonine-protein kinase/receptor R818 from Acanthamoeba polyphaga mimivirus (APMV).